A 102-amino-acid chain; its full sequence is uncharacterized protein (102 aa).

The signal sequence occupies residues 1–41; the sequence is MLFLDSYSLLIQFQRFKNWESPRRFSSSFPLLLFVFKPIFA.

This is an uncharacterized protein from Saccharomyces cerevisiae (strain ATCC 204508 / S288c) (Baker's yeast).